We begin with the raw amino-acid sequence, 444 residues long: Chitinase-like protein Idgf1 (444 aa).

The signal sequence occupies residues 1 to 20; the sequence is MTSLLFVILNIILTLHLCAG. The GH18 domain maps to 29–444; that stretch reads KRLICYYDAQ…PILRSVRGHL (416 aa). Cysteines 33 and 60 form a disulfide. N-linked (GlcNAc...) asparagine glycosylation is found at N213, N225, and N335. C346 and C429 are oxidised to a cystine.

This sequence belongs to the glycosyl hydrolase 18 family. IDGF subfamily. Post-translationally, glycosylated.

It is found in the secreted. Functionally, cooperates with insulin-like peptides to stimulate the proliferation, polarization and motility of imaginal disk cells. May act by stabilizing the binding of insulin-like peptides to its receptor through a simultaneous interaction with both molecules to form a multiprotein signaling complex. The chain is Chitinase-like protein Idgf1 (Idgf1) from Glossina morsitans morsitans (Savannah tsetse fly).